The primary structure comprises 94 residues: Large ribosomal subunit protein bL27 (94 aa).

A propeptide spanning residues methionine 1–phenylalanine 9 is cleaved from the precursor. A disordered region spans residues lysine 12–alanine 33.

Belongs to the bacterial ribosomal protein bL27 family. In terms of processing, the N-terminus is cleaved by ribosomal processing cysteine protease Prp.

The protein is Large ribosomal subunit protein bL27 of Lactococcus lactis subsp. lactis (strain IL1403) (Streptococcus lactis).